We begin with the raw amino-acid sequence, 304 residues long: Acetyl-coenzyme A carboxylase carboxyl transferase subunit beta (304 aa).

A CoA carboxyltransferase N-terminal domain is found at V26 to N295. Zn(2+) is bound by residues C30, C33, C49, and C52. The C4-type zinc-finger motif lies at C30–C52. The disordered stretch occupies residues S281–E304.

The protein belongs to the AccD/PCCB family. In terms of assembly, acetyl-CoA carboxylase is a heterohexamer composed of biotin carboxyl carrier protein (AccB), biotin carboxylase (AccC) and two subunits each of ACCase subunit alpha (AccA) and ACCase subunit beta (AccD). Zn(2+) is required as a cofactor.

It localises to the cytoplasm. It catalyses the reaction N(6)-carboxybiotinyl-L-lysyl-[protein] + acetyl-CoA = N(6)-biotinyl-L-lysyl-[protein] + malonyl-CoA. Its pathway is lipid metabolism; malonyl-CoA biosynthesis; malonyl-CoA from acetyl-CoA: step 1/1. Its function is as follows. Component of the acetyl coenzyme A carboxylase (ACC) complex. Biotin carboxylase (BC) catalyzes the carboxylation of biotin on its carrier protein (BCCP) and then the CO(2) group is transferred by the transcarboxylase to acetyl-CoA to form malonyl-CoA. The chain is Acetyl-coenzyme A carboxylase carboxyl transferase subunit beta from Pasteurella multocida (strain Pm70).